A 321-amino-acid chain; its full sequence is uncharacterized protein (321 aa).

Belongs to the NAD(P)-dependent epimerase/dehydratase family.

This is an uncharacterized protein from Staphylococcus aureus (strain bovine RF122 / ET3-1).